A 454-amino-acid polypeptide reads, in one-letter code: CCA-adding enzyme (454 aa).

Positions 51 and 54 each coordinate ATP. Positions 51 and 54 each coordinate CTP. 3 residues coordinate Mg(2+): Asp63, Asp65, and Asp118. ATP contacts are provided by His141, Lys161, and Tyr170. Positions 141, 161, and 170 each coordinate CTP.

This sequence belongs to the tRNA nucleotidyltransferase/poly(A) polymerase family. Archaeal CCA-adding enzyme subfamily. Homodimer. It depends on Mg(2+) as a cofactor.

The catalysed reaction is a tRNA precursor + 2 CTP + ATP = a tRNA with a 3' CCA end + 3 diphosphate. The enzyme catalyses a tRNA with a 3' CCA end + 2 CTP + ATP = a tRNA with a 3' CCACCA end + 3 diphosphate. Catalyzes the addition and repair of the essential 3'-terminal CCA sequence in tRNAs without using a nucleic acid template. Adds these three nucleotides in the order of C, C, and A to the tRNA nucleotide-73, using CTP and ATP as substrates and producing inorganic pyrophosphate. tRNA 3'-terminal CCA addition is required both for tRNA processing and repair. Also involved in tRNA surveillance by mediating tandem CCA addition to generate a CCACCA at the 3' terminus of unstable tRNAs. While stable tRNAs receive only 3'-terminal CCA, unstable tRNAs are marked with CCACCA and rapidly degraded. This Methanothermobacter thermautotrophicus (strain ATCC 29096 / DSM 1053 / JCM 10044 / NBRC 100330 / Delta H) (Methanobacterium thermoautotrophicum) protein is CCA-adding enzyme.